A 1272-amino-acid chain; its full sequence is Presporeless protein A (1272 aa).

The Nuclear localization signal signature appears at 146 to 161; that stretch reads KDKRIKPIDPKKKISR. Disordered regions lie at residues 369-403 and 468-490; these read ASTINDGEEEDDDDDDNDVDGNDDDNNKEKVDDTS and STSSTNTASSTRSKASSNSNQLK. Positions 374-392 are enriched in acidic residues; that stretch reads DGEEEDDDDDDNDVDGNDD. Positions 393–403 are enriched in basic and acidic residues; it reads DNNKEKVDDTS. The segment covering 468–487 has biased composition (low complexity); sequence STSSTNTASSTRSKASSNSN.

The protein resides in the nucleus. Its function is as follows. Functions autonomously, very early in the prespore pathway, to control prespore cell differentiation, maybe at the level of transcription. Also required for proper aggregation. The polypeptide is Presporeless protein A (pslA) (Dictyostelium discoideum (Social amoeba)).